We begin with the raw amino-acid sequence, 376 residues long: Alanine racemase (376 aa).

Catalysis depends on Lys40, which acts as the Proton acceptor; specific for D-alanine. Lys40 is subject to N6-(pyridoxal phosphate)lysine. A substrate-binding site is contributed by Arg138. Tyr270 functions as the Proton acceptor; specific for L-alanine in the catalytic mechanism. Met317 contributes to the substrate binding site.

This sequence belongs to the alanine racemase family. Pyridoxal 5'-phosphate is required as a cofactor.

The enzyme catalyses L-alanine = D-alanine. The protein operates within amino-acid biosynthesis; D-alanine biosynthesis; D-alanine from L-alanine: step 1/1. Functionally, catalyzes the interconversion of L-alanine and D-alanine. May also act on other amino acids. The chain is Alanine racemase (alr) from Lactobacillus delbrueckii subsp. bulgaricus (strain ATCC 11842 / DSM 20081 / BCRC 10696 / JCM 1002 / NBRC 13953 / NCIMB 11778 / NCTC 12712 / WDCM 00102 / Lb 14).